We begin with the raw amino-acid sequence, 78 residues long: Translational regulator CsrA (78 aa).

It belongs to the CsrA/RsmA family. In terms of assembly, homodimer; the beta-strands of each monomer intercalate to form a hydrophobic core, while the alpha-helices form wings that extend away from the core.

It localises to the cytoplasm. Its function is as follows. A translational regulator that binds mRNA to regulate translation initiation and/or mRNA stability. Usually binds in the 5'-UTR at or near the Shine-Dalgarno sequence preventing ribosome-binding, thus repressing translation. Its main target seems to be the major flagellin gene, while its function is anatagonized by FliW. This is Translational regulator CsrA from Oleidesulfovibrio alaskensis (strain ATCC BAA-1058 / DSM 17464 / G20) (Desulfovibrio alaskensis).